The primary structure comprises 666 residues: Pentatricopeptide repeat-containing protein At1g64100 (666 aa).

PPR repeat units lie at residues 105 to 139 (TAVD…RIPL), 140 to 174 (NIYS…GFQP), 175 to 209 (DVVT…GFLE), 225 to 259 (VVIT…GLHI), 260 to 294 (DVVT…HIKP), 295 to 329 (DVVI…GIAP), 330 to 364 (NVFT…EINP), 365 to 399 (DVLT…CIFP), 400 to 430 (DTVT…MASP), 431 to 465 (DVVT…GLVA), 466 to 500 (NTTT…GVCP), 501 to 535 (DTIT…KIDL), 536 to 570 (DTVA…GVEP), 571 to 605 (DVQT…GHEP), and 606 to 640 (DNST…GFSG).

This sequence belongs to the PPR family. P subfamily.

The sequence is that of Pentatricopeptide repeat-containing protein At1g64100 from Arabidopsis thaliana (Mouse-ear cress).